The following is a 739-amino-acid chain: Poly(A) polymerase alpha (739 aa).

The segment covering 1–17 (MPFPVTTQGSQQTQPPQ) has biased composition (low complexity). The segment at 1 to 23 (MPFPVTTQGSQQTQPPQKHYGIT) is disordered. Phosphoserine is present on residues serine 10 and serine 24. ATP contacts are provided by residues 100 to 102 (FGS), threonine 109, 113 to 115 (DID), aspartate 167, lysine 228, tyrosine 237, and 246 to 247 (GV). Residues aspartate 113, aspartate 115, and aspartate 167 each contribute to the Mg(2+) site. Residues lysine 444, lysine 445, lysine 506, and lysine 507 each participate in a glycyl lysine isopeptide (Lys-Gly) (interchain with G-Cter in SUMO) cross-link. The short motif at 490 to 507 (RKQLHQLLPSHVLQKKKK) is the Nuclear localization signal 1 element. 2 disordered regions span residues 501 to 565 (VLQK…AVTA) and 580 to 700 (QINS…TIQT). The ser/Thr-rich stretch occupies residues 508–643 (HSTEGVKLTP…AKIPNPIVGV (136 aa)). A compositionally biased stretch (low complexity) spans 518 to 534 (LNDSSLDLSMDSDNSMS). A compositionally biased stretch (polar residues) spans 535–557 (VPSPTSAMKTSPLNSSGSSQGRN). At serine 537 the chain carries Phosphoserine; by MAPK. Residue serine 558 is modified to Phosphoserine. The segment covering 583-594 (SSESSGGTSSES) has biased composition (low complexity). The span at 595-604 (IPQTATQPAI) shows a compositional bias: polar residues. Low complexity predominate over residues 611-620 (TVSRVVSSTR). N6-acetyllysine occurs at positions 635 and 644. A Nuclear localization signal 2 motif is present at residues 644 to 659 (KRTSSPHKEESPKKTK). Basic and acidic residues-rich tracts occupy residues 649 to 660 (PHKEESPKKTKT) and 676 to 686 (GHDKTETKEQL). A required for interaction with NUDT21 region spans residues 671-739 (CLALSGHDKT…KNSIKLRLNR (69 aa)). Residues 688–700 (TETSTTQSETIQT) are compositionally biased toward low complexity. Lysine 730 bears the N6-acetyllysine; alternate mark. A Glycyl lysine isopeptide (Lys-Gly) (interchain with G-Cter in SUMO); alternate cross-link involves residue lysine 730. Position 732 is a phosphoserine (serine 732). Lysine 734 bears the N6-acetyllysine; alternate mark. Lysine 734 is covalently cross-linked (Glycyl lysine isopeptide (Lys-Gly) (interchain with G-Cter in SUMO); alternate).

It belongs to the poly(A) polymerase family. In terms of assembly, monomer. Found in a complex with CPSF1, FIP1L1 and PAPOLA. Interacts with AHCYL1 and FIP1L1; the interaction with AHCYL1 seems to increase interaction with FIP1L1. Interacts with NUDT21; the interaction is diminished by acetylation. Interacts with KPNB1; the interaction promotes PAP nuclear import and is inhibited by acetylation of PAP. Requires Mg(2+) as cofactor. The cofactor is Mn(2+). Polysumoylated. Varying sumoylation depending on tissue- and cell-type. Highly sumoylated in bladder and NIH 3T3 cells. Sumoylation is required for nuclear localization and enhances PAP stability. Desumoylated by SENP1. Inhibits polymerase activity. In terms of processing, hyperphosphorylation on multiple CDK2 consensus and non-consensus sites in the C-terminal Ser/Thr-rich region represses PAP activity in late M-phase. Phosphorylation/dephosphorylation may regulate the interaction between PAP and CPSF. Post-translationally, acetylated in the C-terminus. Acetylation decreases interaction with NUDT21 and KPNB1, and inhibits nuclear localization through inhibiting binding to the importin alpha/beta complex.

The protein resides in the nucleus. It carries out the reaction RNA(n) + ATP = RNA(n)-3'-adenine ribonucleotide + diphosphate. In terms of biological role, polymerase that creates the 3'-poly(A) tail of mRNA's. Also required for the endoribonucleolytic cleavage reaction at some polyadenylation sites. May acquire specificity through interaction with a cleavage and polyadenylation specificity factor (CPSF) at its C-terminus. In Bos taurus (Bovine), this protein is Poly(A) polymerase alpha (PAPOLA).